Reading from the N-terminus, the 707-residue chain is Elongation factor G (707 aa).

Positions His9 to Glu293 constitute a tr-type G domain. GTP-binding positions include Ala18–Thr25, Asp90–His94, and Asn144–Asp147.

It belongs to the TRAFAC class translation factor GTPase superfamily. Classic translation factor GTPase family. EF-G/EF-2 subfamily.

Its subcellular location is the cytoplasm. Functionally, catalyzes the GTP-dependent ribosomal translocation step during translation elongation. During this step, the ribosome changes from the pre-translocational (PRE) to the post-translocational (POST) state as the newly formed A-site-bound peptidyl-tRNA and P-site-bound deacylated tRNA move to the P and E sites, respectively. Catalyzes the coordinated movement of the two tRNA molecules, the mRNA and conformational changes in the ribosome. This is Elongation factor G from Bifidobacterium longum (strain DJO10A).